A 302-amino-acid polypeptide reads, in one-letter code: Deubiquitinase OTUD6B (302 aa).

Residues 1–10 (MEGSEDEEAE) show a composition bias toward acidic residues. Disordered regions lie at residues 1–52 (MEGS…KQLA) and 99–121 (EQQI…AALE). The segment covering 106-116 (RISKAQKRREK) has biased composition (basic residues). In terms of domain architecture, OTU spans 156–293 (LEIKQIPSDG…GEHYNSVKLL (138 aa)). The interval 161–167 (IPSDGHC) is cys-loop. Aspartate 164 is an active-site residue. The active-site Nucleophile is the cysteine 167. Residues 228 to 238 (IANTAAWGGQL) form a variable-loop region. The his-loop stretch occupies residues 276 to 286 (YMRHAYGLGEH). Histidine 286 is an active-site residue.

The catalysed reaction is Thiol-dependent hydrolysis of ester, thioester, amide, peptide and isopeptide bonds formed by the C-terminal Gly of ubiquitin (a 76-residue protein attached to proteins as an intracellular targeting signal).. In terms of biological role, deubiquitinating enzyme that may play a role in the ubiquitin-dependent regulation of different cellular processes. The sequence is that of Deubiquitinase OTUD6B (OTUD6B) from Gallus gallus (Chicken).